The sequence spans 89 residues: Class I hydrophobin D (89 aa).

Positions 1–16 are cleaved as a signal peptide; the sequence is MKFSLATIALAAAVVA. Intrachain disulfides connect cysteine 28/cysteine 68, cysteine 39/cysteine 60, cysteine 40/cysteine 52, and cysteine 69/cysteine 85. Asparagine 36 is a glycosylation site (N-linked (GlcNAc...) asparagine).

Belongs to the fungal hydrophobin family.

The protein localises to the secreted. It localises to the cell wall. The protein resides in the vacuole. Its subcellular location is the cytoplasmic vesicle. Its function is as follows. Aerial growth, conidiation, and dispersal of filamentous fungi in the environment rely upon a capability of their secreting small amphipathic proteins called hydrophobins (HPBs) with low sequence identity. Class I can self-assemble into an outermost layer of rodlet bundles on aerial cell surfaces, conferring cellular hydrophobicity that supports fungal growth, development and dispersal; whereas Class II form highly ordered films at water-air interfaces through intermolecular interactions but contribute nothing to the rodlet structure. Hyd1D contributes to certain cell wall-related features, such as hydrophobicity but is not involved in cell wall-related events during fungal proliferation in host hemocoel. Does not contribute to conidial hydrophobicity. Involved in insect hemocoel colonization independent of cell hydrophobicity. This is Class I hydrophobin D from Beauveria bassiana (strain ARSEF 2860) (White muscardine disease fungus).